Reading from the N-terminus, the 212-residue chain is Pyridoxine/pyridoxamine 5'-phosphate oxidase (212 aa).

Substrate-binding positions include 7–10 and Lys65; that span reads RRQY. FMN is bound by residues 60-65, 75-76, Arg81, Lys82, and Gln104; these read RIVLLK and FT. Residues Tyr122, Arg126, and Ser130 each coordinate substrate. FMN-binding positions include 139–140 and Trp184; that span reads QS. 190-192 contacts substrate; the sequence is RLH. Arg194 provides a ligand contact to FMN.

This sequence belongs to the pyridoxamine 5'-phosphate oxidase family. In terms of assembly, homodimer. Requires FMN as cofactor.

The catalysed reaction is pyridoxamine 5'-phosphate + O2 + H2O = pyridoxal 5'-phosphate + H2O2 + NH4(+). It catalyses the reaction pyridoxine 5'-phosphate + O2 = pyridoxal 5'-phosphate + H2O2. Its pathway is cofactor metabolism; pyridoxal 5'-phosphate salvage; pyridoxal 5'-phosphate from pyridoxamine 5'-phosphate: step 1/1. The protein operates within cofactor metabolism; pyridoxal 5'-phosphate salvage; pyridoxal 5'-phosphate from pyridoxine 5'-phosphate: step 1/1. In terms of biological role, catalyzes the oxidation of either pyridoxine 5'-phosphate (PNP) or pyridoxamine 5'-phosphate (PMP) into pyridoxal 5'-phosphate (PLP). This is Pyridoxine/pyridoxamine 5'-phosphate oxidase from Alteromonas mediterranea (strain DSM 17117 / CIP 110805 / LMG 28347 / Deep ecotype).